Consider the following 585-residue polypeptide: Potassium-transporting ATPase potassium-binding subunit (585 aa).

12 consecutive transmembrane segments (helical) span residues 23–43 (GVII…ILSF), 85–105 (FINL…VIMF), 152–172 (FVIT…SMAF), 194–214 (IFDL…LAGI), 275–295 (VEFV…GIVF), 307–327 (VVMF…FAGV), 345–365 (AIGI…STGA), 367–387 (NAAL…GLLL), 397–417 (GVLN…LMVG), 444–464 (LLVV…SSFV), 502–522 (LDGV…LIIA), and 547–567 (VLLI…IIVL).

The protein belongs to the KdpA family. The system is composed of three essential subunits: KdpA, KdpB and KdpC.

It localises to the cell membrane. Functionally, part of the high-affinity ATP-driven potassium transport (or Kdp) system, which catalyzes the hydrolysis of ATP coupled with the electrogenic transport of potassium into the cytoplasm. This subunit binds the extracellular potassium ions and delivers the ions to the membrane domain of KdpB through an intramembrane tunnel. This chain is Potassium-transporting ATPase potassium-binding subunit, found in Thermoplasma acidophilum (strain ATCC 25905 / DSM 1728 / JCM 9062 / NBRC 15155 / AMRC-C165).